The chain runs to 583 residues: MKRSMYAGRVRSEHIGTSITLKGWVGRRRDLGGLIFIDLRDREGIMQLVINPEEVSASVMATAESLRSEFVIEVSGVVTAREQANDNLPTGEVELKVQELSILNTSKTTPFEIKDGIEANDDTRMRYRYLDLRRPEMLENFKLRAKVTHSIRNYLDNLEFIDVETPMLTKSTPEGARDYLVPSRVNQGHFYALPQSPQITKQLLMNAGFDRYYQIVKCFRDEDLRGDRQPEFTQVDLETSFLSDQEIQDIVEGMIAKVMKDTKGLEVSLPFPRMAYDDAMNNYGSDKPDTRFDMLLQDLTEIVKEVDFKVFSEASVVKAIVVKDKADKYSRKNIDKLTEIAKQYGAKGLAWLKYADNTISGPVAKFLTAIEGRLTEALQLENNDLILFVADSLEVANETLGALRTRIAKELELIDYSKFNFLWVVDWPMFEWSEEEGRYMSAHHPFTLPTAETAHELEGDLAKVRAVAYDIVLNGYELGGGSLRINQKDTQERMFKALGFSAESAQEQFGFLLEAMDYGFPPHGGLAIGLDRFVMLLAGKDNIREVIAFPKNNKASDPMTQAPSLVSEQQLEELSLTVESYEN.

E174 provides a ligand contact to L-aspartate. Positions 198-201 (QITK) are aspartate. R220 provides a ligand contact to L-aspartate. ATP-binding positions include 220–222 (RDE) and Q229. Position 443 (H443) interacts with L-aspartate. E477 is a binding site for ATP. R484 contacts L-aspartate. Residue 529-532 (GLDR) coordinates ATP.

Belongs to the class-II aminoacyl-tRNA synthetase family. Type 1 subfamily. Homodimer.

Its subcellular location is the cytoplasm. It carries out the reaction tRNA(Asp) + L-aspartate + ATP = L-aspartyl-tRNA(Asp) + AMP + diphosphate. Functionally, catalyzes the attachment of L-aspartate to tRNA(Asp) in a two-step reaction: L-aspartate is first activated by ATP to form Asp-AMP and then transferred to the acceptor end of tRNA(Asp). The chain is Aspartate--tRNA ligase from Streptococcus agalactiae serotype V (strain ATCC BAA-611 / 2603 V/R).